Consider the following 238-residue polypeptide: Ribonuclease PH (238 aa).

Phosphate contacts are provided by residues Arg86 and 124 to 126 (GTR).

It belongs to the RNase PH family. In terms of assembly, homohexameric ring arranged as a trimer of dimers.

The enzyme catalyses tRNA(n+1) + phosphate = tRNA(n) + a ribonucleoside 5'-diphosphate. Phosphorolytic 3'-5' exoribonuclease that plays an important role in tRNA 3'-end maturation. Removes nucleotide residues following the 3'-CCA terminus of tRNAs; can also add nucleotides to the ends of RNA molecules by using nucleoside diphosphates as substrates, but this may not be physiologically important. Probably plays a role in initiation of 16S rRNA degradation (leading to ribosome degradation) during starvation. The polypeptide is Ribonuclease PH (Erwinia tasmaniensis (strain DSM 17950 / CFBP 7177 / CIP 109463 / NCPPB 4357 / Et1/99)).